The chain runs to 550 residues: Glucose-6-phosphate isomerase (550 aa).

Residue E355 is the Proton donor of the active site. Residues H386 and K512 contribute to the active site.

The protein belongs to the GPI family.

It is found in the cytoplasm. It carries out the reaction alpha-D-glucose 6-phosphate = beta-D-fructose 6-phosphate. Its pathway is carbohydrate biosynthesis; gluconeogenesis. It participates in carbohydrate degradation; glycolysis; D-glyceraldehyde 3-phosphate and glycerone phosphate from D-glucose: step 2/4. In terms of biological role, catalyzes the reversible isomerization of glucose-6-phosphate to fructose-6-phosphate. This chain is Glucose-6-phosphate isomerase, found in Rhodococcus opacus (strain B4).